We begin with the raw amino-acid sequence, 1159 residues long: Calcium-activated potassium channel subunit alpha-1 (1159 aa).

Residues 1-24 (EPNMDALIIPVTMEVPCDSRGQRM) lie on the Extracellular side of the membrane. The helical transmembrane segment at 25–45 (WWAFLASSMVTFFGGLFIILL) threads the bilayer. The Cytoplasmic portion of the chain corresponds to 46 to 116 (WRTLKYLWTV…MISAQTLTGR (71 aa)). S-palmitoyl cysteine attachment occurs at residues cysteine 56, cysteine 57, and cysteine 59. The helical transmembrane segment at 117–137 (VLVVLVFALSIGALVIYFIDS) threads the bilayer. Residues 138 to 152 (SNPIESCQNFYKDFT) are Extracellular-facing. Residues 153–173 (LQIDMAFNVFFLLYFGLRFIA) form a helical membrane-spanning segment. The Cytoplasmic segment spans residues 174–177 (ANDN). A helical membrane pass occupies residues 178-198 (LWFWLEVNSVVDFFTVPPVFV). At 199–202 (SVYL) the chain is on the extracellular side. Residues 203-223 (NRSWLGLRFLRALRLIQFSEI) traverse the membrane as a helical; Voltage-sensor segment. At 224–238 (LQFLNILKTSNSIKL) the chain is on the cytoplasmic side. A helical transmembrane segment spans residues 239-259 (VNLLSIFISTWLTAAGFIHLV). Topologically, residues 260 to 273 (ENSGDPWENFQNSQ) are extracellular. Residues 274–296 (ALTYWECVYLLMVTMSTVGYGDV) constitute an intramembrane region (pore-forming). A Selectivity for potassium motif is present at residues 290 to 293 (TVGY). Residues 297-305 (YAKTTPGGL) lie on the Extracellular side of the membrane. Residues 306 to 326 (FIVFFILGGLAMFASYVPEII) traverse the membrane as a helical segment. Over 327-1159 (EIIGNRKKYG…PPIREVEDEC (833 aa)) the chain is Cytoplasmic. Residues 345–487 (RKHIVVCGHI…WNWKEGDDAI (143 aa)) enclose the RCK N-terminal 1 domain. Residues glutamate 377, glutamine 400, and glutamate 402 each coordinate Mg(2+). Positions 494 to 514 (LGFIAQSCLAQGLSTMLANLF) are segment S7. Residues 551-571 (LSFPTVCELCFVKLKLLMIAI) form a segment S8 region. The segment at 615–619 (CKACH) is heme-binding motif. Residues 639-668 (EQPSTLSPKKKQRNGGMRNSPSSSPKLMRH) form a disordered region. A Phosphothreonine modification is found at threonine 643. 3 positions are modified to phosphoserine: serine 645, serine 658, and serine 662. The tract at residues 717 to 737 (VLSGHVVVCIFGHVSSALIGL) is segment S9. Residues 719 to 863 (SGHVVVCIFG…MDKSSPDNSP (145 aa)) form the RCK N-terminal 2 domain. The residue at position 850 (threonine 850) is a Phosphothreonine. Residues serine 858 and serine 862 each carry the phosphoserine modification. A Calcium bowl motif is present at residues 883–905 (TELVNDTNVQFLDQDDDDDPDTE). Glutamine 892, aspartate 895, aspartate 898, and aspartate 900 together coordinate Ca(2+). The tract at residues 912–932 (FACGTAFAVSVLDSLMSATYF) is segment S10. Residues 1066-1091 (RASLSHSSHSSQSSSKKSSSVHSIPS) show a composition bias toward low complexity. Positions 1066-1124 (RASLSHSSHSSQSSSKKSSSVHSIPSTANRQNRPKSRESRDKQTEKKWFTDEPDNAYPR) are disordered. Residues 1100–1115 (KSRESRDKQTEKKWFT) show a composition bias toward basic and acidic residues. Serine 1101 and serine 1104 each carry phosphoserine.

This sequence belongs to the potassium channel family. Calcium-activated (TC 1.A.1.3) subfamily. KCa1.1/KCNMA1 sub-subfamily. In terms of assembly, homotetramer; which constitutes the calcium-activated potassium channel. Interacts with beta subunits KCNMB1, KCNMB2, KCNMB3 and KCNMB4. Interacts with gamma subunits LRRC26, LRRC38, LRRC52 and LRRC55. Beta and gamma subunits are accessory, and modulate its activity. Interacts with RAB11B. Post-translationally, phosphorylated. Phosphorylation by kinases such as PKA and/or PKG. In smooth muscles, phosphorylation affects its activity. Palmitoylation by ZDHHC22 and ZDHHC23 within the intracellular linker between the S0 and S1 transmembrane domains regulates localization to the plasma membrane. Depalmitoylated by LYPLA1 and LYPLAL1, leading to retard exit from the trans-Golgi network. Expressed in all vascular and smooth muscles.

Its subcellular location is the cell membrane. The catalysed reaction is K(+)(in) = K(+)(out). With respect to regulation, ethanol and carbon monoxide-bound heme increase channel activation. Heme inhibits channel activation. Its function is as follows. Potassium channel activated by both membrane depolarization or increase in cytosolic Ca(2+) that mediates export of K(+). It is also activated by the concentration of cytosolic Mg(2+). Its activation dampens the excitatory events that elevate the cytosolic Ca(2+) concentration and/or depolarize the cell membrane. It therefore contributes to repolarization of the membrane potential. Plays a key role in controlling excitability in a number of systems, such as regulation of the contraction of smooth muscle, the tuning of hair cells in the cochlea, regulation of transmitter release, and innate immunity. In smooth muscles, its activation by high level of Ca(2+), caused by ryanodine receptors in the sarcoplasmic reticulum, regulates the membrane potential. In cochlea cells, its number and kinetic properties partly determine the characteristic frequency of each hair cell and thereby helps to establish a tonotopic map. Kinetics of KCNMA1 channels are determined by alternative splicing, phosphorylation status and its combination with modulating beta subunits. Highly sensitive to both iberiotoxin (IbTx) and charybdotoxin (CTX). This Canis lupus familiaris (Dog) protein is Calcium-activated potassium channel subunit alpha-1 (KCNMA1).